We begin with the raw amino-acid sequence, 146 residues long: Putative pre-16S rRNA nuclease (146 aa).

The protein belongs to the YqgF nuclease family.

It is found in the cytoplasm. Functionally, could be a nuclease involved in processing of the 5'-end of pre-16S rRNA. The polypeptide is Putative pre-16S rRNA nuclease (Burkholderia mallei (strain SAVP1)).